Here is a 347-residue protein sequence, read N- to C-terminus: GDT1-like protein 2, chloroplastic (347 aa).

The N-terminal 12 residues, 1 to 12 (MATAISVGVAVP), are a transit peptide targeting the chloroplast. The disordered stretch occupies residues 70-97 (EAGSHGEHLDSSATRDSNKPTKPPSGSR). 7 helical membrane-spanning segments follow: residues 99 to 119 (PQSI…IVFF), 124 to 144 (SAVV…LIFV), 165 to 185 (ALVL…SVII), 196 to 216 (FQTT…FFGF), 257 to 277 (LTSP…AEWG), 299 to 319 (GAIA…AFLA), and 327 to 347 (VGLI…FGVF).

It belongs to the GDT1 family.

Its subcellular location is the plastid. It localises to the chloroplast membrane. The polypeptide is GDT1-like protein 2, chloroplastic (Oryza sativa subsp. japonica (Rice)).